Reading from the N-terminus, the 509-residue chain is Kynureninase 1 (509 aa).

Pyridoxal 5'-phosphate-binding positions include leucine 169, threonine 170, 197 to 200 (FPSD), aspartate 283, histidine 286, and tyrosine 308. Lysine 309 bears the N6-(pyridoxal phosphate)lysine mark. Pyridoxal 5'-phosphate-binding residues include tryptophan 349 and asparagine 377.

The protein belongs to the kynureninase family. In terms of assembly, homodimer. Pyridoxal 5'-phosphate is required as a cofactor.

The protein resides in the cytoplasm. It carries out the reaction L-kynurenine + H2O = anthranilate + L-alanine + H(+). The catalysed reaction is 3-hydroxy-L-kynurenine + H2O = 3-hydroxyanthranilate + L-alanine + H(+). The protein operates within amino-acid degradation; L-kynurenine degradation; L-alanine and anthranilate from L-kynurenine: step 1/1. It participates in cofactor biosynthesis; NAD(+) biosynthesis; quinolinate from L-kynurenine: step 2/3. Its function is as follows. Catalyzes the cleavage of L-kynurenine (L-Kyn) and L-3-hydroxykynurenine (L-3OHKyn) into anthranilic acid (AA) and 3-hydroxyanthranilic acid (3-OHAA), respectively. This Aspergillus fumigatus (strain CBS 144.89 / FGSC A1163 / CEA10) (Neosartorya fumigata) protein is Kynureninase 1 (bna5-1).